The primary structure comprises 232 residues: MAHKRGKKYQDAAKQVEADKVYGMGDAIDLVKKIDFAKFDATVEVAFKLNVDTKQADQQLRGALVLPNGTGKETTVIVFAKGDQAKAAEAAGADVVGEQDLVERIQDGWLDFDVAIATPDMMAQVGRLGRVLGPKGLMPNPKTGTVTMNVEKAVSDAKNGQVTYRTDRDGNVAVPFGKVSFDADKLAGNLKSIAETIVRIRPAAVRGTYVQHVSISSTFGPSVDVDLASLLA.

It belongs to the universal ribosomal protein uL1 family. As to quaternary structure, part of the 50S ribosomal subunit.

In terms of biological role, binds directly to 23S rRNA. The L1 stalk is quite mobile in the ribosome, and is involved in E site tRNA release. Its function is as follows. Protein L1 is also a translational repressor protein, it controls the translation of the L11 operon by binding to its mRNA. This chain is Large ribosomal subunit protein uL1, found in Levilactobacillus brevis (strain ATCC 367 / BCRC 12310 / CIP 105137 / JCM 1170 / LMG 11437 / NCIMB 947 / NCTC 947) (Lactobacillus brevis).